Here is a 197-residue protein sequence, read N- to C-terminus: Imidazoleglycerol-phosphate dehydratase (197 aa).

It belongs to the imidazoleglycerol-phosphate dehydratase family.

It is found in the cytoplasm. It carries out the reaction D-erythro-1-(imidazol-4-yl)glycerol 3-phosphate = 3-(imidazol-4-yl)-2-oxopropyl phosphate + H2O. The protein operates within amino-acid biosynthesis; L-histidine biosynthesis; L-histidine from 5-phospho-alpha-D-ribose 1-diphosphate: step 6/9. The polypeptide is Imidazoleglycerol-phosphate dehydratase (Methylococcus capsulatus (strain ATCC 33009 / NCIMB 11132 / Bath)).